Here is a 93-residue protein sequence, read N- to C-terminus: YcgL domain-containing protein VFMJ11_1829 (93 aa).

The 84-residue stretch at 1–84 (MFCSIYKSTK…PPENLLEKYK (84 aa)) folds into the YcgL domain.

In Aliivibrio fischeri (strain MJ11) (Vibrio fischeri), this protein is YcgL domain-containing protein VFMJ11_1829.